The sequence spans 1503 residues: Lysophospholipase NTE1 (1503 aa).

At 1-25 the chain is on the cytoplasmic side; it reads MDSSTAALATASAKLDAVAQQGSSS. The helical transmembrane segment at 26–46 threads the bilayer; sequence WIGFFANIILGIISLVYSILY. Residues 47–71 are Lumenal-facing; sequence SVLKLTTFSIPSLLYTLFSTSLTVT. The chain crosses the membrane as a helical span at residues 72-92; the sequence is MNATTLMLIIVLVFSLVSWFV. The Cytoplasmic portion of the chain corresponds to 93–1503; that stretch reads RYRYLNMYSR…RTMAPRRASI (1411 aa). Disordered stretches follow at residues 252-348, 454-561, and 722-745; these read RHGG…TTSV, TKGI…SNPF, and KNES…RFMD. 6 stretches are compositionally biased toward polar residues: residues 262–272, 285–302, 487–496, 506–542, 552–561, and 723–737; these read TSATETYTSSR, STVS…SSHG, QRPSSVTASP, KHTS…STLL, PLSQRTSNPF, and NESS…QQGS. Residues 658–777 and 821–941 contribute to the a nucleoside 3',5'-cyclic phosphate site; these read GLPV…GYVG and RLTN…IASR. The 165-residue stretch at 1200–1364 folds into the PNPLA domain; that stretch reads LVLGGGGARG…IDNLTVSHMK (165 aa). Residues 1204-1209 carry the GXGXXG motif; the sequence is GGGARG. Positions 1231-1235 match the GXSXG motif; it reads GTSIG. Serine 1233 functions as the Nucleophile in the catalytic mechanism. Aspartate 1351 functions as the Proton acceptor in the catalytic mechanism. The short motif at 1351-1353 is the DGA/G element; sequence DGG.

It belongs to the NTE family.

It localises to the endoplasmic reticulum membrane. The catalysed reaction is a 1-acyl-sn-glycero-3-phosphocholine + H2O = sn-glycerol 3-phosphocholine + a fatty acid + H(+). Inhibited by organophosphorus esters. Its function is as follows. Intracellular phospholipase B that catalyzes the double deacylation of phosphatidylcholine (PC) to glycerophosphocholine (GroPCho). Plays an important role in membrane lipid homeostasis. Responsible for the rapid PC turnover in response to inositol, elevated temperatures, or when choline is present in the growth medium. The polypeptide is Lysophospholipase NTE1 (NTE1) (Pyricularia oryzae (strain 70-15 / ATCC MYA-4617 / FGSC 8958) (Rice blast fungus)).